Here is a 305-residue protein sequence, read N- to C-terminus: MLNFSDRLIESIKKKNSVLIAGIDTSIENVPDYFIKRFYDREKSEIDNLKTILFEYNRRIIDAVEENVVGVKFQAAFFEQYSYHGFEVLHKLCEYAKNKKLVVIFDGKRNDISSSAKGYSNAYLGETPVFGRKIRFFEFDAITTNPYLGQDGIKPFVEDCERFKKGLFVLVKTSNPSSADFQDLTVEDKYLFEVVAEKVYEWGKNCVGKEGYSDIGAVVGATQKEAAKRIREILPNSFLLVPGIGVQGGKVEDLKYFVDSNNMGIIVNSSRDIIYAYKNYVHSDFEKSSYLASKSIKESINAAIS.

The Proton donor role is filled by Lys108.

It belongs to the OMP decarboxylase family. Type 2 subfamily.

It carries out the reaction orotidine 5'-phosphate + H(+) = UMP + CO2. It participates in pyrimidine metabolism; UMP biosynthesis via de novo pathway; UMP from orotate: step 2/2. The protein is Orotidine 5'-phosphate decarboxylase of Caldicellulosiruptor saccharolyticus (strain ATCC 43494 / DSM 8903 / Tp8T 6331).